The sequence spans 316 residues: Thioredoxin reductase (316 aa).

Position 36–43 (36–43 (ERGIPGGQ)) interacts with FAD. Cysteines 135 and 138 form a disulfide. 278 to 287 (DIREKSLRQI) is an FAD binding site.

The protein belongs to the class-II pyridine nucleotide-disulfide oxidoreductase family. In terms of assembly, homodimer. FAD is required as a cofactor.

Its subcellular location is the cytoplasm. It carries out the reaction [thioredoxin]-dithiol + NADP(+) = [thioredoxin]-disulfide + NADPH + H(+). The sequence is that of Thioredoxin reductase (trxB) from Bacillus subtilis (strain 168).